We begin with the raw amino-acid sequence, 171 residues long: uncharacterized protein (171 aa).

Residues 3–171 (KKVAIILANE…FNREIVKQLQ (169 aa)) form the PfpI endopeptidase domain.

Belongs to the peptidase C56 family.

This is an uncharacterized protein from Staphylococcus aureus (strain COL).